Consider the following 547-residue polypeptide: CAP-Gly domain-containing linker protein 3 (547 aa).

Residues 1–49 (MTKTDPAPMAPPPRGEEEEEEEEDEPVPEAPSPTQERRQKPVVHPSAPA) are disordered. The span at 16 to 27 (EEEEEEEEDEPV) shows a compositional bias: acidic residues. ANK repeat units lie at residues 117 to 155 (TDMT…DVTL), 160 to 189 (TNMN…PRVV), and 197 to 226 (NHGS…NPAL). A CAP-Gly 1 domain is found at 314–356 (GTTEFASGQWVGVELDEPEGKNDGSVGGVRYFICPPKQGLFAS). The tract at residues 365–413 (DAPPSSVTSTPRTPRMDFSRVTGKGRREHKGKKKTPSSPSLGSLQQRDR) is disordered. A compositionally biased stretch (low complexity) spans 367–377 (PPSSVTSTPRT). Thr-374 carries the phosphothreonine modification. Positions 387–399 (GKGRREHKGKKKT) are enriched in basic residues. Residues 400 to 409 (PSSPSLGSLQ) are compositionally biased toward polar residues. At Ser-401 the chain carries Phosphoserine. The CAP-Gly 2 domain occupies 436 to 478 (GKTDFAPGYWYGIELDQPTGKHDGSVFGVRYFTCPPRHGVFAP). A goLD region spans residues 488–547 (STDSPGDSVGAKKVHQVTMTQPKRTFTTVRTPKDIASENSISRLLFCCWFPWMLRAEMQS). 2 S-palmitoyl cysteine lipidation sites follow: Cys-534 and Cys-535.

In terms of assembly, homodimer. Interacts with AKT1 and AKT2; when AKT1 and AKT2 are phosphorylated and activated, affinity is higher for AKT2. Interacts with ZDHHC13 (via ANK repeats). Interacts with ZDHHC17 (via ANK repeats). Post-translationally, palmitoylation by ZDHHC17 regulates association with the plasma membrane.

It is found in the cell membrane. The protein localises to the cytoplasm. It localises to the golgi apparatus. The protein resides in the golgi stack. Functionally, functions as a cytoplasmic linker protein. Involved in TGN-endosome dynamics. May modulate the cellular compartmentalization of AKT kinase family and promote its cell membrane localization, thereby playing a role in glucose transport in adipocytes. This Pongo abelii (Sumatran orangutan) protein is CAP-Gly domain-containing linker protein 3 (CLIP3).